The sequence spans 177 residues: MSRVAKAPVSVPAGVEVKLDGQLLTVKGKNGELTRTIHNFVEVKQDNNELTFSPRNDGAEANAQAGTTRALVNAMVIGVTEGFTKKLQLVGVGYRAQVKGNVVNLSLGFSHPVEHTLPAGITAECPSQTEIVLKGADKQLIGQVAADIRAYRSPEPYKGKGVRYSDEVVRTKEAKKK.

The protein belongs to the universal ribosomal protein uL6 family. In terms of assembly, part of the 50S ribosomal subunit.

In terms of biological role, this protein binds to the 23S rRNA, and is important in its secondary structure. It is located near the subunit interface in the base of the L7/L12 stalk, and near the tRNA binding site of the peptidyltransferase center. The sequence is that of Large ribosomal subunit protein uL6 from Mannheimia succiniciproducens (strain KCTC 0769BP / MBEL55E).